The sequence spans 273 residues: Dermonecrotic toxin LhSicTox-alphaIA2bvi (273 aa).

His5 is a catalytic residue. Residues Glu25 and Asp27 each coordinate Mg(2+). Residue His41 is the Nucleophile of the active site. 2 cysteine pairs are disulfide-bonded: Cys45–Cys51 and Cys47–Cys190. Asp85 is a Mg(2+) binding site.

Belongs to the arthropod phospholipase D family. Class II subfamily. The cofactor is Mg(2+). As to expression, expressed by the venom gland.

Its subcellular location is the secreted. The enzyme catalyses an N-(acyl)-sphingosylphosphocholine = an N-(acyl)-sphingosyl-1,3-cyclic phosphate + choline. The catalysed reaction is an N-(acyl)-sphingosylphosphoethanolamine = an N-(acyl)-sphingosyl-1,3-cyclic phosphate + ethanolamine. It catalyses the reaction a 1-acyl-sn-glycero-3-phosphocholine = a 1-acyl-sn-glycero-2,3-cyclic phosphate + choline. It carries out the reaction a 1-acyl-sn-glycero-3-phosphoethanolamine = a 1-acyl-sn-glycero-2,3-cyclic phosphate + ethanolamine. Its function is as follows. Dermonecrotic toxins cleave the phosphodiester linkage between the phosphate and headgroup of certain phospholipids (sphingolipid and lysolipid substrates), forming an alcohol (often choline) and a cyclic phosphate. This toxin acts on sphingomyelin (SM). It may also act on ceramide phosphoethanolamine (CPE), lysophosphatidylcholine (LPC) and lysophosphatidylethanolamine (LPE), but not on lysophosphatidylserine (LPS), and lysophosphatidylglycerol (LPG). It acts by transphosphatidylation, releasing exclusively cyclic phosphate products as second products. Induces dermonecrosis, hemolysis, increased vascular permeability, edema, inflammatory response, and platelet aggregation. The chain is Dermonecrotic toxin LhSicTox-alphaIA2bvi from Loxosceles hirsuta (Recluse spider).